The primary structure comprises 99 residues: Plastocyanin (99 aa).

In terms of domain architecture, Plastocyanin-like spans 1–99 (IEIKLGGDDG…AGMVGKVTVQ (99 aa)). 4 residues coordinate Cu cation: His37, Cys84, His87, and Met92.

Belongs to the plastocyanin family. It depends on Cu(2+) as a cofactor.

The protein resides in the plastid. It is found in the chloroplast thylakoid membrane. Its function is as follows. Participates in electron transfer between P700 and the cytochrome b6-f complex in photosystem I. In Rumex obtusifolius (Bitter dock), this protein is Plastocyanin (PETE).